A 696-amino-acid chain; its full sequence is Elongation factor G (696 aa).

The region spanning 8–290 is the tr-type G domain; sequence ERYRNIGIMA…AVLDYLPSPL (283 aa). Residues 17 to 24, 88 to 92, and 142 to 145 each bind GTP; these read AHIDAGKT, DTPGH, and NKMD.

It belongs to the TRAFAC class translation factor GTPase superfamily. Classic translation factor GTPase family. EF-G/EF-2 subfamily.

Its subcellular location is the cytoplasm. Its function is as follows. Catalyzes the GTP-dependent ribosomal translocation step during translation elongation. During this step, the ribosome changes from the pre-translocational (PRE) to the post-translocational (POST) state as the newly formed A-site-bound peptidyl-tRNA and P-site-bound deacylated tRNA move to the P and E sites, respectively. Catalyzes the coordinated movement of the two tRNA molecules, the mRNA and conformational changes in the ribosome. In Nitrosomonas europaea (strain ATCC 19718 / CIP 103999 / KCTC 2705 / NBRC 14298), this protein is Elongation factor G.